The chain runs to 334 residues: MQKKVIAAIIGTSAISAVAATQANAATTHTVKPGESVWAISNKYGISIAKLKSLNNLTSNLIFPNQVLKVSGSSNSTSNSSRPSTNSGGGSYYTVQAGDSLSLIASKYGTTYQNIMRLNGLNNFFIYPGQKLKVSGTASSSNSTSNSSRPSTNSSGGSYYTVQAGDSLSLIASKYGTTYQNIMRLNGLNNFFIYPGQKLKVTGNASTNSGSTTTTNRGYNTPVFNHQNLYTWGQCTYHVFNRRAEIGKGISTYWWNANNWDNAAAADGYTIDNRPTVGSIAQTDVGYYGHVMFVERVNNDGSILVSEMNYSAAPGILTYRTVPAYQVNNYRYIH.

The N-terminal stretch at 1–25 (MQKKVIAAIIGTSAISAVAATQANA) is a signal peptide. The 44-residue stretch at 27 to 70 (TTHTVKPGESVWAISNKYGISIAKLKSLNNLTSNLIFPNQVLKV) folds into the LysM 1 domain. Residues 71-86 (SGSSNSTSNSSRPSTN) show a composition bias toward low complexity. The segment at 71–90 (SGSSNSTSNSSRPSTNSGGG) is disordered. The LysM 2 domain occupies 91-134 (SYYTVQAGDSLSLIASKYGTTYQNIMRLNGLNNFFIYPGQKLKV). A disordered region spans residues 137-156 (TASSSNSTSNSSRPSTNSSG). The LysM 3 domain occupies 158-201 (SYYTVQAGDSLSLIASKYGTTYQNIMRLNGLNNFFIYPGQKLKV). One can recognise a Peptidase C51 domain in the interval 210–334 (GSTTTTNRGY…YQVNNYRYIH (125 aa)).

It localises to the secreted. It is found in the cell surface. It catalyses the reaction Hydrolyzes the link between N-acetylmuramoyl residues and L-amino acid residues in certain cell-wall glycopeptides.. Peptidoglycan hydrolase involved in the splitting of the septum during cell division. This is N-acetylmuramoyl-L-alanine amidase sle1 (sle1) from Staphylococcus aureus (strain MRSA252).